We begin with the raw amino-acid sequence, 380 residues long: Cytochrome b (380 aa).

4 helical membrane-spanning segments follow: residues 33–53 (FGSL…FLAM), 77–98 (WLIR…YFHI), 113–133 (WNIG…GYVL), and 178–198 (FFAF…LHLL). Heme b contacts are provided by histidine 83 and histidine 97. 2 residues coordinate heme b: histidine 182 and histidine 196. A ubiquinone is bound at residue histidine 201. 4 consecutive transmembrane segments (helical) span residues 226–246 (YKDL…ALFS), 288–308 (LGGV…PFLH), 320–340 (VSQF…WIGG), and 347–367 (FIII…VFFP).

This sequence belongs to the cytochrome b family. The cytochrome bc1 complex contains 3 respiratory subunits (MT-CYB, CYC1 and UQCRFS1), 2 core proteins (UQCRC1 and UQCRC2) and probably 6 low-molecular weight proteins. Heme b is required as a cofactor.

The protein resides in the mitochondrion inner membrane. Component of the ubiquinol-cytochrome c reductase complex (complex III or cytochrome b-c1 complex) that is part of the mitochondrial respiratory chain. The b-c1 complex mediates electron transfer from ubiquinol to cytochrome c. Contributes to the generation of a proton gradient across the mitochondrial membrane that is then used for ATP synthesis. The protein is Cytochrome b (mt-cyb) of Sarda sarda (Atlantic bonito).